The following is a 177-amino-acid chain: Zinc metalloproteinase-disintegrin-like scutiarin (177 aa).

One can recognise a Disintegrin domain in the interval 1 to 63; that stretch reads NPCCDAATCK…ECPADVFHKN (63 aa). 10 disulfides stabilise this stretch: cysteine 3/cysteine 26, cysteine 17/cysteine 23, cysteine 22/cysteine 48, cysteine 35/cysteine 55, cysteine 42/cysteine 74, cysteine 67/cysteine 79, cysteine 86/cysteine 136, cysteine 101/cysteine 147, cysteine 114/cysteine 124, and cysteine 131/cysteine 173. The D/ECD-tripeptide signature appears at 41 to 43; the sequence is ECD. Residues aspartate 43, proline 44, glutamate 46, aspartate 58, and valine 59 each coordinate Ca(2+).

This sequence belongs to the venom metalloproteinase (M12B) family. P-III subfamily. P-IIIa sub-subfamily. In terms of assembly, monomer. Requires Zn(2+) as cofactor. Post-translationally, glycosylated. Expressed by the venom gland.

It is found in the secreted. Its function is as follows. Snake venom metalloproteinase that impairs hemostasis in the envenomed animal. The chain is Zinc metalloproteinase-disintegrin-like scutiarin from Crotalus scutulatus scutulatus (Mojave rattlesnake).